A 455-amino-acid chain; its full sequence is Chromosomal replication initiator protein DnaA (455 aa).

The tract at residues 1 to 82 is domain I, interacts with DnaA modulators; that stretch reads MNRNTSSLWA…NPDFVVKLVE (82 aa). The tract at residues 82 to 117 is domain II; sequence EGVKPAPKQNNIVTTKQNAETAVDSEQHLQSVEFKT. The interval 118–335 is domain III, AAA+ region; sequence GLNSNHLFEN…GALNRVIANA (218 aa). ATP is bound by residues Gly-163, Gly-165, Lys-166, and Thr-167. The interval 336-455 is domain IV, binds dsDNA; it reads EFTGKTITID…WSNLIRTLSA (120 aa).

The protein belongs to the DnaA family. Oligomerizes as a right-handed, spiral filament on DNA at oriC.

It is found in the cytoplasm. Functionally, plays an essential role in the initiation and regulation of chromosomal replication. ATP-DnaA binds to the origin of replication (oriC) to initiate formation of the DNA replication initiation complex once per cell cycle. Binds the DnaA box (a 9 base pair repeat at the origin) and separates the double-stranded (ds)DNA. Forms a right-handed helical filament on oriC DNA; dsDNA binds to the exterior of the filament while single-stranded (ss)DNA is stabiized in the filament's interior. The ATP-DnaA-oriC complex binds and stabilizes one strand of the AT-rich DNA unwinding element (DUE), permitting loading of DNA polymerase. After initiation quickly degrades to an ADP-DnaA complex that is not apt for DNA replication. Binds acidic phospholipids. The sequence is that of Chromosomal replication initiator protein DnaA from Actinobacillus succinogenes (strain ATCC 55618 / DSM 22257 / CCUG 43843 / 130Z).